Reading from the N-terminus, the 476-residue chain is Homeobox protein invected (476 aa).

Disordered stretches follow at residues 1–43, 273–331, and 347–381; these read MAAV…SEDI, KTRY…TSGD, and DRPS…AFSG. The segment covering 23-32 has biased composition (polar residues); that stretch reads SPNTRDTTSP. 2 stretches are compositionally biased toward basic and acidic residues: residues 33-43 and 292-305; these read ECHDDEKSEDI and KLDE…KTPD. Positions 318–331 are enriched in low complexity; it reads GSNSGSTSGATSGD. Positions 372 to 431 form a DNA-binding region, homeobox; that stretch reads EKRPRTAFSGPQLARLKHEFAENRYLTERRRQSLAAELGLAEAQIKIWFQNKRAKIKKAS.

It belongs to the engrailed homeobox family. Expressed in the middle silk gland but not in the posterior silk gland during the fourth molt/fifth intermolt period.

Its subcellular location is the nucleus. Its function is as follows. This protein might be involved in the compartmentalization of the silk gland. The chain is Homeobox protein invected (INV) from Bombyx mori (Silk moth).